The following is a 535-amino-acid chain: CTP synthase (535 aa).

Residues Met-1–Leu-266 form an amidoligase domain region. Ser-12 contacts CTP. Ser-12 provides a ligand contact to UTP. Residues Gly-13–Ile-18 and Asp-70 each bind ATP. Mg(2+) contacts are provided by Asp-70 and Glu-140. Residues Asp-147 to Glu-149, Lys-187 to Gln-192, and Lys-223 each bind CTP. UTP contacts are provided by residues Lys-187–Gln-192 and Lys-223. The 245-residue stretch at Arg-291–Asp-535 folds into the Glutamine amidotransferase type-1 domain. Gly-355 contacts L-glutamine. Cys-382 functions as the Nucleophile; for glutamine hydrolysis in the catalytic mechanism. L-glutamine is bound by residues Leu-383–Gln-386, Glu-406, and Arg-464. Residues His-508 and Glu-510 contribute to the active site.

It belongs to the CTP synthase family. As to quaternary structure, homotetramer.

It carries out the reaction UTP + L-glutamine + ATP + H2O = CTP + L-glutamate + ADP + phosphate + 2 H(+). The enzyme catalyses L-glutamine + H2O = L-glutamate + NH4(+). It catalyses the reaction UTP + NH4(+) + ATP = CTP + ADP + phosphate + 2 H(+). The protein operates within pyrimidine metabolism; CTP biosynthesis via de novo pathway; CTP from UDP: step 2/2. Allosterically activated by GTP, when glutamine is the substrate; GTP has no effect on the reaction when ammonia is the substrate. The allosteric effector GTP functions by stabilizing the protein conformation that binds the tetrahedral intermediate(s) formed during glutamine hydrolysis. Inhibited by the product CTP, via allosteric rather than competitive inhibition. Catalyzes the ATP-dependent amination of UTP to CTP with either L-glutamine or ammonia as the source of nitrogen. Regulates intracellular CTP levels through interactions with the four ribonucleotide triphosphates. The chain is CTP synthase from Methanopyrus kandleri (strain AV19 / DSM 6324 / JCM 9639 / NBRC 100938).